The sequence spans 546 residues: Alpha-isocomene synthase (546 aa).

4 residues coordinate Mg(2+): aspartate 299, aspartate 303, aspartate 443, and glutamate 451. A DDXXD motif motif is present at residues 299–303; the sequence is DDTYD.

The protein belongs to the terpene synthase family. Tpsa subfamily. The cofactor is Mg(2+). Requires Mn(2+) as cofactor. Highly expressed in roots, lower levels in stems and leaves and detected in disk florets, but not in ray florets.

It carries out the reaction (2E,6E)-farnesyl diphosphate = (-)-alpha-isocomene + diphosphate. It participates in secondary metabolite biosynthesis; terpenoid biosynthesis. In terms of biological role, sesquiterpene synthase involved in the biosynthesis of alpha-isocomene as the major product and detectable amounts of beta-caryophyllene, beta-isocomene, silphinene and modeph-2-ene. Produces exclusively the (-)-(E)-beta caryophyllene enantiomer. The chain is Alpha-isocomene synthase from Matricaria chamomilla var. recutita (German chamomile).